The following is a 277-amino-acid chain: 2,3,4,5-tetrahydropyridine-2,6-dicarboxylate N-succinyltransferase (277 aa).

Residues arginine 106 and aspartate 143 each contribute to the substrate site.

The protein belongs to the transferase hexapeptide repeat family. As to quaternary structure, homotrimer.

The protein localises to the cytoplasm. The enzyme catalyses (S)-2,3,4,5-tetrahydrodipicolinate + succinyl-CoA + H2O = (S)-2-succinylamino-6-oxoheptanedioate + CoA. It participates in amino-acid biosynthesis; L-lysine biosynthesis via DAP pathway; LL-2,6-diaminopimelate from (S)-tetrahydrodipicolinate (succinylase route): step 1/3. This chain is 2,3,4,5-tetrahydropyridine-2,6-dicarboxylate N-succinyltransferase, found in Xylella fastidiosa (strain Temecula1 / ATCC 700964).